A 1578-amino-acid chain; its full sequence is BRD4-interacting chromatin-remodeling complex-associated protein (1578 aa).

3 disordered regions span residues 80–101, 631–673, and 725–951; these read DILGSPAAGGGGGGGGAPDQPC, PAVT…PSLA, and IVSA…PPPR. Positions 86–96 are enriched in gly residues; that stretch reads AAGGGGGGGGA. 2 stretches are compositionally biased toward low complexity: residues 631–662 and 764–782; these read PAVTTPLPMGLQQPQAQQPPQVPTPQAATQPQ and IPAAAPLKAPGPASSPSLP. 3 stretches are compositionally biased toward pro residues: residues 793 to 816, 824 to 841, and 865 to 888; these read MPSPHPARPPSRPPSRPHSRPPSQ, PSEPTLHPCPPPQGPPTL, and PGPPQPPLRPPSQPPEGPLPPASH. Low complexity predominate over residues 889–906; the sequence is LPPASTPSAVASSSEPSA. A Phosphoserine modification is found at Ser929. The residue at position 931 (Thr931) is a Phosphothreonine. A compositionally biased stretch (pro residues) spans 942–951; the sequence is PTAPPPPPPR. Lys1067 bears the N6-acetyllysine mark. Residues 1206–1316 are disordered; the sequence is EKPDEYVSSS…NRPPIKTYEA (111 aa). 2 stretches are compositionally biased toward low complexity: residues 1233–1247 and 1275–1294; these read SHGQSSSSSTSGTSA and ASSSLSSTSSSSSSSSAASS. A Glycyl lysine isopeptide (Lys-Gly) (interchain with G-Cter in SUMO2) cross-link involves residue Lys1327. Disordered stretches follow at residues 1342 to 1435 and 1457 to 1578; these read DPVH…PTKV and VLKG…TLNR. Over residues 1346–1370 the composition is skewed to pro residues; that stretch reads QPLPAPTPAKGAEPPPHPAPPPLPP. Residue Ser1427 is modified to Phosphoserine. Residues 1502–1532 show a composition bias toward polar residues; sequence ASFSSDSPQDDTLTEHLQSAIDSILNLQQAP. Positions 1538-1553 are enriched in pro residues; that stretch reads GPYPHTGPTPGTPTSP.

In terms of assembly, component of the multiprotein chromatin-remodeling complexes SWI/SNF: SWI/SNF-A (BAF), SWI/SNF-B (PBAF) and related complexes. The canonical complex contains a catalytic subunit (either SMARCA4/BRG1/BAF190A or SMARCA2/BRM/BAF190B) and at least SMARCE1, ACTL6A/BAF53, SMARCC1/BAF155, SMARCC2/BAF170, and SMARCB1/SNF5/BAF47. Other subunits specific to each of the complexes may also be present permitting several possible combinations developmentally and tissue specific. Component of the SWI/SNF (GBAF) subcomplex, which includes at least BICRA or BICRAL (mutually exclusive), BRD9, SS18, the core BAF subunits, SMARCA2/BRM, SMARCA4/BRG1/BAF190A, ACTL6A/BAF53, SMARCC1/BAF155, and SMARCD1/BAF60A. Interacts with BRD4; the interaction bridges BRD4 to the GBAF complex.

The protein localises to the nucleus. In terms of biological role, component of SWI/SNF chromatin remodeling subcomplex GBAF that carries out key enzymatic activities, changing chromatin structure by altering DNA-histone contacts within a nucleosome in an ATP-dependent manner. May play a role in BRD4-mediated gene transcription. The sequence is that of BRD4-interacting chromatin-remodeling complex-associated protein from Mus musculus (Mouse).